A 376-amino-acid polypeptide reads, in one-letter code: Galactoside alpha-(1,2)-fucosyltransferase 1 (376 aa).

The Cytoplasmic portion of the chain corresponds to M1 to A12. Residues F13–N29 form a helical; Signal-anchor for type II membrane protein membrane-spanning segment. The Lumenal portion of the chain corresponds to G30–A376. N-linked (GlcNAc...) asparagine glycosylation is found at N64, N302, and N328.

This sequence belongs to the glycosyltransferase 11 family.

It is found in the golgi apparatus. Its subcellular location is the golgi stack membrane. The catalysed reaction is a beta-D-galactosyl-(1-&gt;4)-N-acetyl-beta-D-glucosaminyl derivative + GDP-beta-L-fucose = an alpha-L-Fuc-(1-&gt;2)-beta-D-Gal-(1-&gt;4)-beta-D-GlcNAc derivative + GDP + H(+). It carries out the reaction a ganglioside GA1 + GDP-beta-L-fucose = a ganglioside Fuc-GA1 + GDP + H(+). It catalyses the reaction a beta-D-Gal-(1-&gt;3)-beta-D-GlcNAc-(1-&gt;3)-beta-D-Gal-(1-&gt;4)-beta-D-Glc-(1&lt;-&gt;1')-Cer(d18:1(4E)) + GDP-beta-L-fucose = alpha-L-fucosyl-(1-&gt;2)- beta-D-galactosyl-(1-&gt;3)-N-acetyl-beta-D-glucosaminyl-(1-&gt;3)-beta-D-galactosyl-(1-&gt;4)-beta-D-glucosyl-(1&lt;-&gt;1')-N-acylsphing-4-enine + GDP + H(+). The enzyme catalyses a neolactoside nLc4Cer(d18:1(4E)) + GDP-beta-L-fucose = a neolactoside IV(2)-alpha-Fuc-nLc4Cer(d18:1(4E)) + GDP + H(+). The catalysed reaction is a ganglioside GM1 + GDP-beta-L-fucose = a ganglioside Fuc-GM1 + GDP + H(+). It carries out the reaction beta-D-galactosyl-(1-&gt;3)-N-acetyl-D-galactosamine + GDP-beta-L-fucose = alpha-L-fucosyl-(1-&gt;2)-beta-D-galactosyl-(1-&gt;3)-N-acetyl-D-galactosamine + GDP + H(+). Its pathway is protein modification; protein glycosylation. In terms of biological role, catalyzes the transfer of L-fucose, from a guanosine diphosphate-beta-L-fucose, to the terminal galactose residue of glycoconjugates through an alpha(1,2) linkage leading to H antigen synthesis that is an intermediate substrate in the synthesis of ABO blood group antigens. H antigen is essential for maturation of the glomerular layer of the main olfactory bulb, in cell migration and early cell-cell contacts during tumor associated angiogenesis. Preferentially fucosylates soluble lactose and to a lesser extent fucosylates glycolipids gangliosides GA1 and GM1a. The chain is Galactoside alpha-(1,2)-fucosyltransferase 1 from Rattus norvegicus (Rat).